Consider the following 478-residue polypeptide: 3-ketoacyl-CoA synthase 3 (478 aa).

Residues 1 to 25 (MDLLVMLLSLLVSYLIFKIWKRIDS) form the signal peptide. Positions 26–313 (KRDQNCYILD…FMLCLLLKKL (288 aa)) constitute an FAE domain. Active-site residues include Cys-168, His-247, His-345, His-349, His-378, and Asn-382.

The protein belongs to the thiolase-like superfamily. Chalcone/stilbene synthases family. In terms of tissue distribution, expressed in siliques, leaves, stems and seedlings.

It localises to the endoplasmic reticulum. It carries out the reaction a very-long-chain acyl-CoA + malonyl-CoA + H(+) = a very-long-chain 3-oxoacyl-CoA + CO2 + CoA. The protein operates within lipid metabolism; fatty acid biosynthesis. The chain is 3-ketoacyl-CoA synthase 3 from Arabidopsis thaliana (Mouse-ear cress).